We begin with the raw amino-acid sequence, 241 residues long: Ubiquinone biosynthesis O-methyltransferase (241 aa).

S-adenosyl-L-methionine contacts are provided by R44, G63, D84, and M128.

The protein belongs to the methyltransferase superfamily. UbiG/COQ3 family.

The catalysed reaction is a 3-demethylubiquinol + S-adenosyl-L-methionine = a ubiquinol + S-adenosyl-L-homocysteine + H(+). The enzyme catalyses a 3-(all-trans-polyprenyl)benzene-1,2-diol + S-adenosyl-L-methionine = a 2-methoxy-6-(all-trans-polyprenyl)phenol + S-adenosyl-L-homocysteine + H(+). It participates in cofactor biosynthesis; ubiquinone biosynthesis. In terms of biological role, O-methyltransferase that catalyzes the 2 O-methylation steps in the ubiquinone biosynthetic pathway. The protein is Ubiquinone biosynthesis O-methyltransferase of Hydrogenovibrio crunogenus (strain DSM 25203 / XCL-2) (Thiomicrospira crunogena).